A 325-amino-acid chain; its full sequence is Pectinesterase A (325 aa).

Positions 1–18 (MRVQSYLSLFSLVGAALC) are cleaved as a signal peptide. The N-linked (GlcNAc...) asparagine glycan is linked to N126. A substrate-binding site is contributed by Q143. Catalysis depends on D166, which acts as the Proton donor. D187 functions as the Nucleophile in the catalytic mechanism. Residues R247 and W249 each coordinate substrate.

Belongs to the pectinesterase family.

Its subcellular location is the secreted. It carries out the reaction [(1-&gt;4)-alpha-D-galacturonosyl methyl ester](n) + n H2O = [(1-&gt;4)-alpha-D-galacturonosyl](n) + n methanol + n H(+). It functions in the pathway glycan metabolism; pectin degradation; 2-dehydro-3-deoxy-D-gluconate from pectin: step 1/5. In terms of biological role, involved in maceration and soft-rotting of plant tissue. Active against citrus pectin. The sequence is that of Pectinesterase A (pmeA) from Emericella nidulans (strain FGSC A4 / ATCC 38163 / CBS 112.46 / NRRL 194 / M139) (Aspergillus nidulans).